The chain runs to 909 residues: MFSAIAKKVFGTRNDRAVKRLAKEVERINALEPEIEALSDDQLRARTEAFREQVEQGRTLDDLLPEAFAVAREASRRVLGMRHFDVQLIGGMVLHQGKIAEMKTGEGKTLVATLAVYLHALSGRGVHVVTVNDYLARRDAAWMGRIYEFLGLSVGVVVPGQSREEKKAAYEADITYGTNNEFGFDYLRDNMAFRPEDRVQRELAYAIVDEVDSILIDEARTPLIISGPAEQSSELYQQMTRIVPRLQRQEEEDGPGDYYLDEKARQAHITEEGHENIERLLQAEGLLEEGESLYDARNISLVHHLNAALRAHTLFQKDVNYLVQDNKIVIVDEFTGRAMPGRRWSEGLHQAVEAKEGVPIQSENQTLASITFQNYFRMYELLAGMTGTADTEAFEFQHIYGLEVLSIPTHKPMIRDDMTDLVYRTAREKYDAIIEDIQWCAQHDRPVLVGTTSIEASELLSKALRKAKIPHNVLNAKNHEQEAGIIANAGLPGAVTIATNMAGRGTDIVLGGNLEAELAELGEDASEEKIEQVKRDWQARHDRVIEAGGLHVIGTERHESRRIDNQLRGRAGRQGDPGSSRFYLSLEDSLLRIFASERMSGMMQRLGMEEGEAIESPMVSRVIENAQRKVEAYNFDVRKHLLDFDDVANDQRRVIYQQRRELLEADDVSETVDAMRNDVIDSVISEFIPPGSIDEQWDVAGLEETLESDFGLKLPLRQWLDEDDSLHEETLRERIHHEVEAHYRGKEELAGAEVLRQFEKAVMLQVLDKTWKDHLAAMDYLRQGIHLRGYAQRNPKQEFKREAFAMFQEMLEGLKREVVGLLCRVRVRAEEDVEAVEEQRRRQGDMQYRHAQANSLSGQGAGGEGAAGGTARGPVQQADQLPFGRKVGRNEPCPCGSGKKYKQCCGKLS.

Residues Gln87, 105 to 109 (GEGKT), and Asp507 contribute to the ATP site. Residues 834–909 (EAVEEQRRRQ…KYKQCCGKLS (76 aa)) form a disordered region. A compositionally biased stretch (basic and acidic residues) spans 837-848 (EEQRRRQGDMQY). Over residues 859-871 (QGAGGEGAAGGTA) the composition is skewed to gly residues. Cys893, Cys895, Cys904, and Cys905 together coordinate Zn(2+).

The protein belongs to the SecA family. Monomer and homodimer. Part of the essential Sec protein translocation apparatus which comprises SecA, SecYEG and auxiliary proteins SecDF-YajC and YidC. The cofactor is Zn(2+).

It is found in the cell inner membrane. The protein resides in the cytoplasm. The enzyme catalyses ATP + H2O + cellular proteinSide 1 = ADP + phosphate + cellular proteinSide 2.. Its function is as follows. Part of the Sec protein translocase complex. Interacts with the SecYEG preprotein conducting channel. Has a central role in coupling the hydrolysis of ATP to the transfer of proteins into and across the cell membrane, serving both as a receptor for the preprotein-SecB complex and as an ATP-driven molecular motor driving the stepwise translocation of polypeptide chains across the membrane. In Alkalilimnicola ehrlichii (strain ATCC BAA-1101 / DSM 17681 / MLHE-1), this protein is Protein translocase subunit SecA.